The sequence spans 381 residues: Acetylornithine deacetylase (381 aa).

H79 serves as a coordination point for Zn(2+). The active site involves D81. D111 provides a ligand contact to Zn(2+). E143 is an active-site residue. Residues E144, E168, and H354 each coordinate Zn(2+).

This sequence belongs to the peptidase M20A family. ArgE subfamily. As to quaternary structure, homodimer. Zn(2+) serves as cofactor. It depends on Co(2+) as a cofactor. Glutathione is required as a cofactor.

It is found in the cytoplasm. It carries out the reaction N(2)-acetyl-L-ornithine + H2O = L-ornithine + acetate. It participates in amino-acid biosynthesis; L-arginine biosynthesis; L-ornithine from N(2)-acetyl-L-ornithine (linear): step 1/1. Functionally, catalyzes the hydrolysis of the amide bond of N(2)-acetylated L-amino acids. Cleaves the acetyl group from N-acetyl-L-ornithine to form L-ornithine, an intermediate in L-arginine biosynthesis pathway, and a branchpoint in the synthesis of polyamines. This chain is Acetylornithine deacetylase, found in Buchnera aphidicola subsp. Acyrthosiphon pisum (strain Tuc7).